A 195-amino-acid chain; its full sequence is Glycerol-3-phosphate acyltransferase (195 aa).

Transmembrane regions (helical) follow at residues 7 to 27, 52 to 72, 80 to 100, 113 to 133, and 147 to 167; these read IFIL…SYVI, LALL…AIAQ, ILFL…YLFF, LIFI…ICFL, and LIAL…IFTI.

The protein belongs to the PlsY family. As to quaternary structure, probably interacts with PlsX.

The protein resides in the cell inner membrane. It catalyses the reaction an acyl phosphate + sn-glycerol 3-phosphate = a 1-acyl-sn-glycero-3-phosphate + phosphate. The protein operates within lipid metabolism; phospholipid metabolism. Catalyzes the transfer of an acyl group from acyl-phosphate (acyl-PO(4)) to glycerol-3-phosphate (G3P) to form lysophosphatidic acid (LPA). This enzyme utilizes acyl-phosphate as fatty acyl donor, but not acyl-CoA or acyl-ACP. The protein is Glycerol-3-phosphate acyltransferase of Ehrlichia ruminantium (strain Welgevonden).